Here is a 330-residue protein sequence, read N- to C-terminus: Methylthioribose-1-phosphate isomerase (330 aa).

Residues 49–51 (RGA), Arg-83, and Gln-179 contribute to the substrate site. The active-site Proton donor is the Asp-220. Position 230–231 (230–231 (NK)) interacts with substrate.

The protein belongs to the eIF-2B alpha/beta/delta subunits family. MtnA subfamily.

The catalysed reaction is 5-(methylsulfanyl)-alpha-D-ribose 1-phosphate = 5-(methylsulfanyl)-D-ribulose 1-phosphate. Its pathway is amino-acid biosynthesis; L-methionine biosynthesis via salvage pathway; L-methionine from S-methyl-5-thio-alpha-D-ribose 1-phosphate: step 1/6. Functionally, catalyzes the interconversion of methylthioribose-1-phosphate (MTR-1-P) into methylthioribulose-1-phosphate (MTRu-1-P). The polypeptide is Methylthioribose-1-phosphate isomerase (Thermus thermophilus (strain ATCC BAA-163 / DSM 7039 / HB27)).